The sequence spans 459 residues: MTVELWLRLRGKGLAMLHVTRGVWGSRVRVWPLLPALLGPPRALSSLAAKMGEYRKMWNPREPRDWAQQYRERFIPFSKEQLLRLLIQEFHSSPAEKAALEAFSAHVDFCTLFHYHQILARLQALYDPINPDRETLDQPSLTDPQRLSNEQEVLRALEPLLAQANFSPLSEDTLAYALVVHHPQDEVQVTVNLDQYVYIHFWALGQRVGQMPLKSSVGSRRGFFTKLPPAERRYFKRVVLAARTKRGHLVLKSFKDTPLEGLEQLLPELKVRTPTLQRALLNLMLVVSGVAIFVNVGMVVLTDLKVATSLLLLLFAIFMGLRASKMFGQRRSAQALELAHMLYYRSTSNNSELLSALALRAQDEHTKEALLAHSFLARRPGGTQGSPEETSRWLRSEVENWLLAKSGCEVTFNGTRALAHLQALTPSMGLYPPPGFPKLDPVAPITSEPPQATPSSNIS.

Helical transmembrane passes span 280-300 (LLNLMLVVSGVAIFVNVGMVV) and 301-321 (LTDLKVATSLLLLLFAIFMGL). A Phosphoserine modification is found at Ser-332. Residues 435-459 (GFPKLDPVAPITSEPPQATPSSNIS) are disordered. Positions 448–459 (EPPQATPSSNIS) are enriched in polar residues.

It localises to the membrane. This chain is Transmembrane protein 143 (TMEM143), found in Homo sapiens (Human).